A 247-amino-acid polypeptide reads, in one-letter code: MSEATTTLDGWYCLHDLRSIDWAAWKTLSSDERGQAVSEFLNVVEKWNEVATAKKGSHAMYTVVGQKADIMLMILRPTMEELNEIETELNKTTLAEYMVPAYSYVSVVELSNYLPADEDPYQNPQILARLYPELPKANHICFYPMDKRRQGDDNWYMLPMEERKKMMYSHSKIGRQYAGKVRQVISGSVGFDDFEWGVTLFADDVLQFKKLIYEMRFDEVSARYGEFGTFFVGNILPDEKVEKFLHI.

Fe-coproporphyrin III-binding positions include arginine 129, 143–147 (YPMDK), histidine 170, glutamine 183, and serine 221. Tyrosine 143 is a catalytic residue.

The protein belongs to the ChdC family. Type 1 subfamily. Requires Fe-coproporphyrin III as cofactor.

It carries out the reaction Fe-coproporphyrin III + 2 H2O2 + 2 H(+) = heme b + 2 CO2 + 4 H2O. The enzyme catalyses Fe-coproporphyrin III + H2O2 + H(+) = harderoheme III + CO2 + 2 H2O. The catalysed reaction is harderoheme III + H2O2 + H(+) = heme b + CO2 + 2 H2O. It participates in porphyrin-containing compound metabolism; protoheme biosynthesis. In terms of biological role, involved in coproporphyrin-dependent heme b biosynthesis. Catalyzes the decarboxylation of Fe-coproporphyrin III (coproheme) to heme b (protoheme IX), the last step of the pathway. The reaction occurs in a stepwise manner with a three-propionate intermediate. This Bacillus cereus (strain B4264) protein is Coproheme decarboxylase.